Here is a 226-residue protein sequence, read N- to C-terminus: ATP synthase subunit a (226 aa).

Transmembrane regions (helical) follow at residues 18–38, 74–94, 100–120, 162–182, and 187–207; these read LSLN…TYWL, FVSL…PYIF, LTLT…YGWI, LTAN…TGPM, and IILS…SAVA.

The protein belongs to the ATPase A chain family. F-type ATPases have 2 components, CF(1) - the catalytic core - and CF(0) - the membrane proton channel. CF(1) has five subunits: alpha(3), beta(3), gamma(1), delta(1), epsilon(1). CF(0) has three main subunits: a, b and c.

It is found in the mitochondrion inner membrane. Functionally, mitochondrial membrane ATP synthase (F(1)F(0) ATP synthase or Complex V) produces ATP from ADP in the presence of a proton gradient across the membrane which is generated by electron transport complexes of the respiratory chain. F-type ATPases consist of two structural domains, F(1) - containing the extramembraneous catalytic core and F(0) - containing the membrane proton channel, linked together by a central stalk and a peripheral stalk. During catalysis, ATP synthesis in the catalytic domain of F(1) is coupled via a rotary mechanism of the central stalk subunits to proton translocation. Key component of the proton channel; it may play a direct role in the translocation of protons across the membrane. In Aedes aegypti (Yellowfever mosquito), this protein is ATP synthase subunit a.